A 362-amino-acid chain; its full sequence is E3 ubiquitin-protein ligase TM129 (362 aa).

Residues 1-6 (MDSPEV) lie on the Lumenal side of the membrane. The helical transmembrane segment at 7 to 27 (TFTLAYLVFAVCFVFTPTEFH) threads the bilayer. Topologically, residues 28–56 (SAGLTVQNLLSGWLGSEDAAFVPYHLRRT) are cytoplasmic. Residues 57-77 (AATLLCHSLLPLGYYVGMCFA) form a helical membrane-spanning segment. At 78–94 (ASEKQLYYPSQTPETWR) the chain is on the lumenal side. The helical transmembrane segment at 95-115 (AFLLLALMLPAIACTLIYYWS) threads the bilayer. Residues 116–362 (RDHWACHPLA…FCVLDVCAVR (247 aa)) lie on the Cytoplasmic side of the membrane. An RING-type; degenerate zinc finger spans residues 285 to 350 (CIGCMQTQAS…ASRVPCPTCR (66 aa)).

Belongs to the TMEM129 family. Integral component of ER-resident dislocation complexes.

It is found in the endoplasmic reticulum membrane. The catalysed reaction is S-ubiquitinyl-[E2 ubiquitin-conjugating enzyme]-L-cysteine + [acceptor protein]-L-lysine = [E2 ubiquitin-conjugating enzyme]-L-cysteine + N(6)-ubiquitinyl-[acceptor protein]-L-lysine.. The protein operates within protein modification; protein ubiquitination. Functionally, E3 ubiquitin-protein ligase involved in ER-associated protein degradation, preferentially associates with the E2 enzyme UBE2J2. Exploited by viral US11 proteins to mediate HLA class I proteins degradation. The polypeptide is E3 ubiquitin-protein ligase TM129 (TMEM129) (Bos taurus (Bovine)).